Reading from the N-terminus, the 384-residue chain is H-2 class I histocompatibility antigen, TLA(B) alpha chain (384 aa).

Residues 1–26 form the signal peptide; that stretch reads MRMGTPVPGTLLILLAASQGQTQTCP. The segment at 27–116 is alpha-1; the sequence is GSHSLRYFYT…MLDYYNLSQN (90 aa). Residues 27–314 are Extracellular-facing; that stretch reads GSHSLRYFYT…TSMPNRTTVR (288 aa). N-linked (GlcNAc...) asparagine glycosylation is found at Asn63, Asn112, and Asn116. An alpha-2 region spans residues 117-208; the sequence is GSHTIQVMYG…ENRKKTQECT (92 aa). Intrachain disulfides connect Cys127–Cys190 and Cys229–Cys285. An alpha-3 region spans residues 209–300; sequence DPPKTHVTHH…GLPEPLTLRW (92 aa). Residues 211-299 enclose the Ig-like C1-type domain; sequence PKTHVTHHPR…EGLPEPLTLR (89 aa). A connecting peptide region spans residues 301–314; sequence EPPQTSMPNRTTVR. Asn309 carries an N-linked (GlcNAc...) asparagine glycan. The helical transmembrane segment at 315-334 threads the bilayer; sequence ALLGAMIILGFMSGSVMMWM. Residues 335-384 lie on the Cytoplasmic side of the membrane; that stretch reads RKNNGGNGDDNTAAYQNEREHLSLDPRAESEALGVEAGMKDLPSAPPLVS. Residues 354–364 are compositionally biased toward basic and acidic residues; that stretch reads EHLSLDPRAES. The tract at residues 354 to 384 is disordered; sequence EHLSLDPRAESEALGVEAGMKDLPSAPPLVS.

It belongs to the MHC class I family. In terms of assembly, heterodimer of an alpha chain and a beta chain (beta-2-microglobulin). TL antigens are only expressed on thymocytes, activated T-lymphocytes and on some thymic leukemias.

The protein localises to the membrane. In terms of biological role, involved in the presentation of foreign antigens to the immune system. This Mus musculus (Mouse) protein is H-2 class I histocompatibility antigen, TLA(B) alpha chain (H2-T3).